The following is a 739-amino-acid chain: Phosphoribosylformylglycinamidine synthase subunit PurL (739 aa).

His53 is a catalytic residue. The ATP site is built by Tyr56 and Lys95. Residue Glu97 coordinates Mg(2+). Residues 98-101 (SHNH) and Arg120 each bind substrate. His99 functions as the Proton acceptor in the catalytic mechanism. Residue Asp121 coordinates Mg(2+). Substrate is bound at residue Gln244. Asp274 contacts Mg(2+). 318 to 320 (ESQ) is a binding site for substrate. Residues Asp501 and Gly538 each contribute to the ATP site. Mg(2+) is bound at residue Asn539. Ser541 lines the substrate pocket.

It belongs to the FGAMS family. In terms of assembly, monomer. Part of the FGAM synthase complex composed of 1 PurL, 1 PurQ and 2 PurS subunits.

It localises to the cytoplasm. The catalysed reaction is N(2)-formyl-N(1)-(5-phospho-beta-D-ribosyl)glycinamide + L-glutamine + ATP + H2O = 2-formamido-N(1)-(5-O-phospho-beta-D-ribosyl)acetamidine + L-glutamate + ADP + phosphate + H(+). It functions in the pathway purine metabolism; IMP biosynthesis via de novo pathway; 5-amino-1-(5-phospho-D-ribosyl)imidazole from N(2)-formyl-N(1)-(5-phospho-D-ribosyl)glycinamide: step 1/2. Its function is as follows. Part of the phosphoribosylformylglycinamidine synthase complex involved in the purines biosynthetic pathway. Catalyzes the ATP-dependent conversion of formylglycinamide ribonucleotide (FGAR) and glutamine to yield formylglycinamidine ribonucleotide (FGAM) and glutamate. The FGAM synthase complex is composed of three subunits. PurQ produces an ammonia molecule by converting glutamine to glutamate. PurL transfers the ammonia molecule to FGAR to form FGAM in an ATP-dependent manner. PurS interacts with PurQ and PurL and is thought to assist in the transfer of the ammonia molecule from PurQ to PurL. This is Phosphoribosylformylglycinamidine synthase subunit PurL from Listeria monocytogenes serotype 4a (strain HCC23).